Consider the following 403-residue polypeptide: GPI-N-acetylgalactosamine transferase PGAP4 (403 aa).

The Cytoplasmic segment spans residues 1 to 22 (MSTSTSPAAMLLRRLRRLSWGS). A helical membrane pass occupies residues 23–43 (TAVQLFILTVVTFGLLAPLAC). Over 44–259 (HRLLHSYFYL…RLQHYTNPEP (216 aa)) the chain is Lumenal. V109 is a binding site for UDP-N-acetyl-alpha-D-galactosamine. 2 disulfides stabilise this stretch: C132–C136 and C144–C194. Residues 211–213 (EDD) carry the DXD motif motif. Residues 260-280 (MRILEWVGVGMLLGPLLTWIY) traverse the membrane as a helical segment. Over 281-287 (MRFASRP) the chain is Cytoplasmic. The chain crosses the membrane as a helical span at residues 288–308 (GFSWPVMLFFSLYSMGLVELV). The Lumenal segment spans residues 309-403 (GRHYFLELRR…LRYNFHPSLL (95 aa)). A disulfide bond links C332 and C333. T334, P335, and K362 together coordinate UDP-N-acetyl-alpha-D-galactosamine.

The protein belongs to the PGAP4 family. In terms of processing, glycosylated.

It is found in the golgi apparatus membrane. Its function is as follows. Golgi-resident glycosylphosphatidylinositol (GPI)-N-acetylgalactosamine transferase that catalyzes the N-acetyl-beta-D-galactosamine transfer from an UDP-N-acetyl-alpha-D-galactosamine to the 4-OH-position of first mannose of the glycosylphosphatidylinositol (GPI) of a GPI-anchored protein (GPI-AP). This modification occurs after the fatty acid remodeling step of the GPI-anchor maturation. This chain is GPI-N-acetylgalactosamine transferase PGAP4, found in Pongo abelii (Sumatran orangutan).